A 1588-amino-acid chain; its full sequence is MLPPKHLSATKPKKSWAPNLYELDSDLTKEPDVIIGEGPTDSEFFHQRFRNLIYVEFVGPRKTLIKLRNLCLDWLQPETHTKEEIIELLVLEQYLTIIPEKLKPWVRAKKPENCEKLVTLLENYKEMYQPEDDNNSDVTSDDDMTRNRRESSPPHSVHSFSGDRDWDRRGRSRDMEPRDRWSHTRNPRSRMPQRDLSLPVVAKTSFEMDRDDDRDSRAYESRSQDAESYQNVVDLAEDRKPHNTIQDNMENYRKLLSLGVQLAEDDGHSHMTQGHSSRSKRSAYPSTSRGLKTMPEAKKSTHRRGICEDESSHGVIMEKFIKDVSRSSKSGRARESSDRSQRFPRMSDDNWKDISLNKRESVIQQRVYEGNAFRGGFRFNSTLVSRKRVLERKRRYHFDTDGKGSIHDQKACPRKKPFECGSEMRKAMSMSSLSSLSSPSFTESQPIDFGAMPYVCDECGRSFSVISEFVEHQIMHTRENLYEYGESFIHSVAVSEVQKSQVGGKRFECKDCGETFNKSAALAEHRKIHARGYLVECKNQECEEAFMPSPTFSELQKIYGKDKFYECRVCKETFLHSSALIEHQKIHFGDDKDNEREHERERERGETFRPSPALNEFQKMYGKEKMYECKVCGETFLHSSSLKEHQKIHTRGNPFENKGKVCEETFIPGQSLKKRQKTYNKEKLYDFTDGRDAFMQSSELSEHQKIHSRKNLFEGRGYEKSVIHSGPFTESQKSHTITRPLESDEDEKAFTISSNPYENQKIPTKENVYEAKSYERSVIHSLASVEAQKSHSVAGPSKPKVMAESTIQSFDAINHQRVRAGGNTSEGREYSRSVIHSLVASKPPRSHNGNELVESNEKGESSIYISDLNDKRQKIPARENPCEGGSKNRNYEDSVIQSVSRAKPQKSVPGEGSGEFKKDGEFSVPSSNVREYQKARAKKKYIEHRSNETSVIHSLPFGEQTFRPRGMLYECQECGECFAHSSDLTEHQKIHDREKPSGSRNYEWSVIRSLAPTDPQTSYAQEQYAKEQAWNKCKEFRQFFATSEDLNTNQKIYDQEKSHGEESQGENTDGEETHSEETHGQETIEDPVIQGSDMEDPQKDDPDDKIYECEDCGLGFVDLTDLTDHQKVHSRKCLVDSREYTHSVIHTHSISEYQRDYTGEQLYECPKCGESFIHSSFLFEHQRIHEQDQLYSMKGCDDGFIALLPMKPRRNRAAERNPALAGSAIRCLLCGQGFIHSSALNEHMRLHREDDLLEQSQMAEEAIIPGLALTEFQRSQTEERLFECAVCGESFINPAELADHVTVHKNEPYVYGSSYTHTSFLTEPLKGAIPFYECKDCGKSFIHSTVLTKHKELHLEEEEEDEAAAAAAAAAQEVEANVHVPQVVLRIQGSNVEAAEPEVEAXEPEVEAAEPEVEAAEPNGEAEGPDGEAAEPIGEAGQPNGEAEQPNGDADEPDGAGIEDPEERAEEPEGKAEEPEGDADEPDGVGIEDPEEGEDQEIQVEEPYYDCHECTETFTSSTAFGEHLKTHASMIIFEPANAFGECSGYIERASTSTGGANQADEKYFKCDVCGQLFNDRLSLARHQNTHTG.

Residues 46–128 (HQRFRNLIYV…TLLENYKEMY (83 aa)) enclose the SCAN box domain. 3 disordered regions span residues 128 to 230 (YQPE…ESYQ), 266 to 306 (DGHS…RRGI), and 319 to 349 (KFIK…MSDD). A compositionally biased stretch (acidic residues) spans 129-142 (QPEDDNNSDVTSDD). Basic and acidic residues-rich tracts occupy residues 143 to 152 (DMTRNRRESS), 161 to 182 (SGDR…DRWS), 206 to 225 (FEMD…RSQD), and 295 to 306 (PEAKKSTHRRGI). 3 consecutive C2H2-type zinc fingers follow at residues 454 to 476 (YVCD…QIMH), 507 to 529 (FECK…RKIH), and 565 to 587 (YECR…QKIH). Over residues 588-607 (FGDDKDNEREHERERERGET) the composition is skewed to basic and acidic residues. A disordered region spans residues 588 to 610 (FGDDKDNEREHERERERGETFRP). Residues 627–649 (YECKVCGETFLHSSSLKEHQKIH) form a C2H2-type 4 zinc finger. The disordered stretch occupies residues 838–930 (LVASKPPRSH…EFSVPSSNVR (93 aa)). Basic and acidic residues predominate over residues 868-881 (LNDKRQKIPARENP). The C2H2-type 5 zinc finger occupies 969–991 (YECQECGECFAHSSDLTEHQKIH). The tract at residues 1056 to 1104 (EKSHGEESQGENTDGEETHSEETHGQETIEDPVIQGSDMEDPQKDDPDD) is disordered. Basic and acidic residues predominate over residues 1071–1082 (EETHSEETHGQE). C2H2-type zinc fingers lie at residues 1107–1129 (YECE…QKVH), 1163–1185 (YECP…QRIH), 1225–1247 (IRCL…MRLH), 1282–1304 (FECA…VTVH), and 1332–1354 (YECK…KELH). A disordered region spans residues 1393–1495 (EAAEPEVEAX…GIEDPEEGED (103 aa)). Residues 1395-1415 (AEPEVEAXEPEVEAAEPEVEA) show a composition bias toward acidic residues. 7 repeat units span residues 1397 to 1403 (PEVEAXE), 1404 to 1410 (PEVEAAE), 1411 to 1417 (PEVEAAE), 1418 to 1422 (PNGEA), 1425 to 1429 (PDGEA), 1432 to 1436 (PIGEA), and 1439 to 1443 (PNGEA). Residues 1397–1417 (PEVEAXEPEVEAAEPEVEAAE) are 3 X 7 AA repeat of P-E-V-E-A-A-E. The interval 1418-1443 (PNGEAEGPDGEAAEPIGEAGQPNGEA) is 4 X 5 AA repeat of P-X-G-E-A. Acidic residues-rich tracts occupy residues 1449–1466 (DADE…ERAE) and 1475–1495 (PEGD…EGED). 2 consecutive C2H2-type zinc fingers follow at residues 1505 to 1527 (YDCH…LKTH) and 1564 to 1586 (FKCD…QNTH).

Belongs to the krueppel C2H2-type zinc-finger protein family. Homodimer. Interacts with SIAH1A and SIAH2. Interacts with TRAF2.

It localises to the nucleus. The protein resides in the cytoplasm. Functionally, induces apoptosis in cooperation with SIAH1A. Acts as a mediator between p53/TP53 and BAX in a neuronal death pathway that is activated by DNA damage. Acts synergistically with TRAF2 and inhibits TNF induced apoptosis through activation of NF-kappa-B. The polypeptide is Paternally-expressed gene 3 protein (PEG3) (Pan paniscus (Pygmy chimpanzee)).